Consider the following 116-residue polypeptide: Putative antiporter subunit mnhC2 (116 aa).

Transmembrane regions (helical) follow at residues 3 to 23 (LILL…ILSV), 28 to 48 (IVIG…SMGN), and 72 to 92 (AIVL…LVLV).

Belongs to the CPA3 antiporters (TC 2.A.63) subunit C family. May form a heterooligomeric complex that consists of seven subunits: mnhA2, mnhB2, mnhC2, mnhD2, mnhE2, mnhF2 and mnhG2.

It localises to the cell membrane. The chain is Putative antiporter subunit mnhC2 (mnhC2) from Staphylococcus saprophyticus subsp. saprophyticus (strain ATCC 15305 / DSM 20229 / NCIMB 8711 / NCTC 7292 / S-41).